Reading from the N-terminus, the 73-residue chain is Conotoxin Cl9.2 (73 aa).

The signal sequence occupies residues 1-18 (MSKLVILAVLVLLPLVTA). Positions 19–41 (EHGRDEQAMQPEKKTMWTLWSLT) are excised as a propeptide. Intrachain disulfides connect C46-C61, C52-C63, and C58-C72.

As to expression, expressed by the venom duct.

It localises to the secreted. The sequence is that of Conotoxin Cl9.2 from Californiconus californicus (California cone).